The following is a 651-amino-acid chain: Mitogen-activated protein kinase kinase kinase 3 (651 aa).

In terms of domain architecture, Protein kinase spans 68–330 (WRKGELIGCG…ATELLQHPFV (263 aa)). ATP is bound by residues 74–82 (IGCGAFGRV) and lysine 97. Positions 105-130 (SASKEKTQGHIRELEEEVQLLKNLSH) form a coiled coil. Residues lysine 108 and lysine 110 each participate in a glycyl lysine isopeptide (Lys-Gly) (interchain with G-Cter in ubiquitin) cross-link. Aspartate 196 acts as the Proton acceptor in catalysis. The interval 573 to 608 (MPSPLKSSKRTLNTSRVMQSGTEPTQVNESTKKGVN) is disordered. Over residues 582-608 (RTLNTSRVMQSGTEPTQVNESTKKGVN) the composition is skewed to polar residues. Residues 618–641 (RKWEEELYEELERHRENLRHAGAG) adopt a coiled-coil conformation.

This sequence belongs to the protein kinase superfamily. STE Ser/Thr protein kinase family. MAP kinase kinase kinase subfamily. As to quaternary structure, interacts with NACK2 and MKK6. In terms of tissue distribution, expressed in roots and flowers.

Its subcellular location is the cytoplasm. The protein localises to the cytoskeleton. It catalyses the reaction L-seryl-[protein] + ATP = O-phospho-L-seryl-[protein] + ADP + H(+). The enzyme catalyses L-threonyl-[protein] + ATP = O-phospho-L-threonyl-[protein] + ADP + H(+). Functionally, involved in cortical microtubules organization and stabilization by regulating the phosphorylation state of microtubule-associated proteins such as MAP65-1. This Arabidopsis thaliana (Mouse-ear cress) protein is Mitogen-activated protein kinase kinase kinase 3 (ANP3).